The primary structure comprises 191 residues: Recombination protein RecR (191 aa).

The segment at 56 to 71 (CQNCNFLQSNNICHFC) adopts a C4-type zinc-finger fold. The Toprim domain maps to 78 to 170 (KQLMIFETTS…KVTKLAQGLP (93 aa)).

The protein belongs to the RecR family.

May play a role in DNA repair. It seems to be involved in an RecBC-independent recombinational process of DNA repair. It may act with RecF and RecO. This chain is Recombination protein RecR, found in Mycoplasmopsis pulmonis (strain UAB CTIP) (Mycoplasma pulmonis).